The chain runs to 494 residues: ATP synthase subunit alpha 1 (494 aa).

It belongs to the ATPase alpha/beta chains family. F-type ATPases have 2 components, CF(1) - the catalytic core - and CF(0) - the membrane proton channel. CF(1) has five subunits: alpha(3), beta(3), gamma(1), delta(1), epsilon(1). CF(0) has three main subunits: a(1), b(2) and c(9-12). The alpha and beta chains form an alternating ring which encloses part of the gamma chain. CF(1) is attached to CF(0) by a central stalk formed by the gamma and epsilon chains, while a peripheral stalk is formed by the delta and b chains.

It is found in the cell inner membrane. It carries out the reaction ATP + H2O + 4 H(+)(in) = ADP + phosphate + 5 H(+)(out). Its function is as follows. Produces ATP from ADP in the presence of a proton gradient across the membrane. The alpha chain is a regulatory subunit. The protein is ATP synthase subunit alpha 1 of Hahella chejuensis (strain KCTC 2396).